The primary structure comprises 189 residues: MAEINLFEKYSYEEVKVNNVSLRPYINLSRRGIVPHAATTITKGTTGKARIPIAERFVCSLMRHGRNSGKKRLAINIFEDACFIIHSMTKKNPLQVLVDAIVNSGPREDTARIGRAGSMRRTSVDVSPLKRISIAISNLSAGIRNASFRNRITLAEAIANELIAASTNSQNSYAVNKKKEIERIAQSNR.

The protein belongs to the universal ribosomal protein uS7 family. In terms of assembly, component of the small ribosomal subunit.

The protein resides in the cytoplasm. The polypeptide is Small ribosomal subunit protein uS7 (RPS5) (Encephalitozoon cuniculi (strain GB-M1) (Microsporidian parasite)).